The following is a 157-amino-acid chain: uncharacterized protein (157 aa).

Residues 1–11 (MGDLEGQDRPD) are compositionally biased toward basic and acidic residues. The tract at residues 1 to 22 (MGDLEGQDRPDPISTMVGPSGT) is disordered.

The protein resides in the mitochondrion. This is an uncharacterized protein from Arabidopsis thaliana (Mouse-ear cress).